The following is a 68-amino-acid chain: Protein transport protein Sec61 gamma-2 subunit (68 aa).

Over 1 to 32 the chain is Cytoplasmic; that stretch reads MDKVVKFAEPGRAFAKDSIRLVKRCTKPDRKE. Residues 33-61 form a helical membrane-spanning segment; that stretch reads FQKIAIATAVGFCIMGFIGFFVKLIHIPI. Over 62–68 the chain is Extracellular; sequence NNIIVGS.

It belongs to the SecE/SEC61-gamma family. Heterotrimeric complex composed of SEC61-alpha, SEC61-beta and SEC61-gamma.

It localises to the endoplasmic reticulum membrane. Functionally, necessary for protein translocation in the endoplasmic reticulum. This is Protein transport protein Sec61 gamma-2 subunit (Sec61gamma) from Drosophila melanogaster (Fruit fly).